Reading from the N-terminus, the 348-residue chain is S-adenosylmethionine:tRNA ribosyltransferase-isomerase (348 aa).

This sequence belongs to the QueA family. In terms of assembly, monomer.

Its subcellular location is the cytoplasm. It catalyses the reaction 7-aminomethyl-7-carbaguanosine(34) in tRNA + S-adenosyl-L-methionine = epoxyqueuosine(34) in tRNA + adenine + L-methionine + 2 H(+). It functions in the pathway tRNA modification; tRNA-queuosine biosynthesis. In terms of biological role, transfers and isomerizes the ribose moiety from AdoMet to the 7-aminomethyl group of 7-deazaguanine (preQ1-tRNA) to give epoxyqueuosine (oQ-tRNA). The sequence is that of S-adenosylmethionine:tRNA ribosyltransferase-isomerase from Polynucleobacter necessarius subsp. necessarius (strain STIR1).